Here is a 509-residue protein sequence, read N- to C-terminus: Bifunctional purine biosynthesis protein PurH (509 aa).

The 144-residue stretch at 1-144 (MKRALISVSD…KNYAAVTVVV (144 aa)) folds into the MGS-like domain.

The protein belongs to the PurH family.

It carries out the reaction (6R)-10-formyltetrahydrofolate + 5-amino-1-(5-phospho-beta-D-ribosyl)imidazole-4-carboxamide = 5-formamido-1-(5-phospho-D-ribosyl)imidazole-4-carboxamide + (6S)-5,6,7,8-tetrahydrofolate. The catalysed reaction is IMP + H2O = 5-formamido-1-(5-phospho-D-ribosyl)imidazole-4-carboxamide. It functions in the pathway purine metabolism; IMP biosynthesis via de novo pathway; 5-formamido-1-(5-phospho-D-ribosyl)imidazole-4-carboxamide from 5-amino-1-(5-phospho-D-ribosyl)imidazole-4-carboxamide (10-formyl THF route): step 1/1. Its pathway is purine metabolism; IMP biosynthesis via de novo pathway; IMP from 5-formamido-1-(5-phospho-D-ribosyl)imidazole-4-carboxamide: step 1/1. The protein is Bifunctional purine biosynthesis protein PurH of Listeria welshimeri serovar 6b (strain ATCC 35897 / DSM 20650 / CCUG 15529 / CIP 8149 / NCTC 11857 / SLCC 5334 / V8).